The sequence spans 297 residues: Ribosomal RNA small subunit methyltransferase A (297 aa).

N31, L33, G58, E79, D104, and N129 together coordinate S-adenosyl-L-methionine.

Belongs to the class I-like SAM-binding methyltransferase superfamily. rRNA adenine N(6)-methyltransferase family. RsmA subfamily.

It is found in the cytoplasm. The catalysed reaction is adenosine(1518)/adenosine(1519) in 16S rRNA + 4 S-adenosyl-L-methionine = N(6)-dimethyladenosine(1518)/N(6)-dimethyladenosine(1519) in 16S rRNA + 4 S-adenosyl-L-homocysteine + 4 H(+). In terms of biological role, specifically dimethylates two adjacent adenosines (A1518 and A1519) in the loop of a conserved hairpin near the 3'-end of 16S rRNA in the 30S particle. May play a critical role in biogenesis of 30S subunits. In Staphylococcus aureus (strain Newman), this protein is Ribosomal RNA small subunit methyltransferase A.